We begin with the raw amino-acid sequence, 471 residues long: Trigger factor (471 aa).

The region spanning 174–261 is the PPIase FKBP-type domain; that stretch reads GDVAVVSFEG…VKDLKTRELP (88 aa). Residues 436–446 are compositionally biased toward polar residues; it reads ETLPKTKSLNG. The interval 436–471 is disordered; it reads ETLPKTKSLNGKPSTQGKTSQSKSKKTKTKVEKTTK. Residues 447-457 are compositionally biased toward low complexity; sequence KPSTQGKTSQS.

Belongs to the FKBP-type PPIase family. Tig subfamily.

The protein localises to the cytoplasm. The enzyme catalyses [protein]-peptidylproline (omega=180) = [protein]-peptidylproline (omega=0). Functionally, involved in protein export. Acts as a chaperone by maintaining the newly synthesized protein in an open conformation. Functions as a peptidyl-prolyl cis-trans isomerase. The protein is Trigger factor of Prochlorococcus marinus (strain MIT 9211).